Consider the following 426-residue polypeptide: UDP-N-acetylmuramoylalanine--D-glutamate ligase (426 aa).

112-118 provides a ligand contact to ATP; the sequence is GSVGKST.

It belongs to the MurCDEF family.

It localises to the cytoplasm. The catalysed reaction is UDP-N-acetyl-alpha-D-muramoyl-L-alanine + D-glutamate + ATP = UDP-N-acetyl-alpha-D-muramoyl-L-alanyl-D-glutamate + ADP + phosphate + H(+). It functions in the pathway cell wall biogenesis; peptidoglycan biosynthesis. Functionally, cell wall formation. Catalyzes the addition of glutamate to the nucleotide precursor UDP-N-acetylmuramoyl-L-alanine (UMA). The protein is UDP-N-acetylmuramoylalanine--D-glutamate ligase of Thermosipho melanesiensis (strain DSM 12029 / CIP 104789 / BI429).